A 144-amino-acid polypeptide reads, in one-letter code: D-aminoacyl-tRNA deacylase (144 aa).

The Gly-cisPro motif, important for rejection of L-amino acids motif lies at 136 to 137; sequence GP.

The protein belongs to the DTD family. In terms of assembly, homodimer.

It is found in the cytoplasm. It carries out the reaction glycyl-tRNA(Ala) + H2O = tRNA(Ala) + glycine + H(+). The enzyme catalyses a D-aminoacyl-tRNA + H2O = a tRNA + a D-alpha-amino acid + H(+). An aminoacyl-tRNA editing enzyme that deacylates mischarged D-aminoacyl-tRNAs. Also deacylates mischarged glycyl-tRNA(Ala), protecting cells against glycine mischarging by AlaRS. Acts via tRNA-based rather than protein-based catalysis; rejects L-amino acids rather than detecting D-amino acids in the active site. By recycling D-aminoacyl-tRNA to D-amino acids and free tRNA molecules, this enzyme counteracts the toxicity associated with the formation of D-aminoacyl-tRNA entities in vivo and helps enforce protein L-homochirality. The chain is D-aminoacyl-tRNA deacylase from Histophilus somni (strain 129Pt) (Haemophilus somnus).